The primary structure comprises 499 residues: MTPVVALVGRPNVGKSTLFNRLTRTRDALVADFPGLTRDRKYGQAKLGELEFIVVDTGGIDGTEEGIELKMAEQSLLAIEEADVVLFMVDARAGLTAADQAIAAHLRKTHKKVFLVANKTDGIDGDSAVSEFYCLALGDVYQIAAAHGRGVLSLLELALAPHLETLVDAAAEEDAQDEEEEDFDEEALLRMVAAGDLDTREDTKETPFADLPIKFAIVGRPNVGKSTLTNRMLGEDRVIVYDMPGTTRDSVYVPMERDEQKYVVIDTAGVRRRGKVHETVEKFSVIKTLKAIEDANVCLLVIDAQETITDQDLSILGFVLHSGRSVVLVVNKWDGLDQKVKEDVKNELDRRLGFIDFARVHFISALHGSGVGHLFESIQEAYQSATRRTSTAMLTRIMQMAQEDHQPPMVNGRRVKLKYAHAGGYNPPRIVIHGNQLNDLPDSYKRYLINYFRKSLKIMGSPIRVEFQESANPFEGRKNTMTLSQERQRKRLLKAKTKK.

EngA-type G domains lie at 3–166 (PVVA…LETL) and 213–386 (IKFA…QSAT). Residues 9-16 (GRPNVGKS), 56-60 (DTGGI), 118-121 (NKTD), 219-226 (GRPNVGKS), 266-270 (DTAGV), and 331-334 (NKWD) each bind GTP. The region spanning 387-471 (RRTSTAMLTR…PIRVEFQESA (85 aa)) is the KH-like domain. The segment at 476 to 499 (GRKNTMTLSQERQRKRLLKAKTKK) is disordered. Residues 488–499 (QRKRLLKAKTKK) show a composition bias toward basic residues.

Belongs to the TRAFAC class TrmE-Era-EngA-EngB-Septin-like GTPase superfamily. EngA (Der) GTPase family. Associates with the 50S ribosomal subunit.

Its function is as follows. GTPase that plays an essential role in the late steps of ribosome biogenesis. This is GTPase Der from Aeromonas salmonicida (strain A449).